A 507-amino-acid chain; its full sequence is ATP synthase subunit alpha, chloroplastic (507 aa).

Position 170-177 (170-177) interacts with ATP; it reads IGDRQTGK.

Belongs to the ATPase alpha/beta chains family. As to quaternary structure, F-type ATPases have 2 components, CF(1) - the catalytic core - and CF(0) - the membrane proton channel. CF(1) has five subunits: alpha(3), beta(3), gamma(1), delta(1), epsilon(1). CF(0) has four main subunits: a, b, b' and c.

It localises to the plastid. It is found in the chloroplast thylakoid membrane. It catalyses the reaction ATP + H2O + 4 H(+)(in) = ADP + phosphate + 5 H(+)(out). Its function is as follows. Produces ATP from ADP in the presence of a proton gradient across the membrane. The alpha chain is a regulatory subunit. The polypeptide is ATP synthase subunit alpha, chloroplastic (Adiantum capillus-veneris (Maidenhair fern)).